The sequence spans 454 residues: Maintenance of mitochondrial morphology protein 1 (454 aa).

At 1–128 (MSMVIGIGDL…QSSGWGFAHG (128 aa)) the chain is on the lumenal side. A helical transmembrane segment spans residues 129-149 (LLVGQLSVVAVLAFFIKFFIF). At 150–454 (GNSSMARPLM…SESETAVDSN (305 aa)) the chain is on the cytoplasmic side. An SMP-LTD domain is found at 207–430 (QSESLDWFNV…EPRFQLIELP (224 aa)).

It belongs to the MMM1 family. Homodimer. Component of the ER-mitochondria encounter structure (ERMES) or MDM complex, composed of MMM1, MDM10, MDM12 and MDM34. An MMM1 homodimer associates with one molecule of MDM12 on each side in a pairwise head-to-tail manner, and the SMP-LTD domains of MMM1 and MDM12 generate a continuous hydrophobic tunnel for phospholipid trafficking.

The protein localises to the endoplasmic reticulum membrane. In terms of biological role, component of the ERMES/MDM complex, which serves as a molecular tether to connect the endoplasmic reticulum (ER) and mitochondria. Components of this complex are involved in the control of mitochondrial shape and protein biogenesis, and function in nonvesicular lipid trafficking between the ER and mitochondria. The MDM12-MMM1 subcomplex functions in the major beta-barrel assembly pathway that is responsible for biogenesis of all outer membrane beta-barrel proteins, and acts in a late step after the SAM complex. The MDM10-MDM12-MMM1 subcomplex further acts in the TOM40-specific pathway after the action of the MDM12-MMM1 complex. Essential for establishing and maintaining the structure of mitochondria and maintenance of mtDNA nucleoids. This Komagataella phaffii (strain GS115 / ATCC 20864) (Yeast) protein is Maintenance of mitochondrial morphology protein 1.